Consider the following 375-residue polypeptide: Succinyl-diaminopimelate desuccinylase (375 aa).

Residue H66 coordinates Zn(2+). D68 is an active-site residue. D99 contacts Zn(2+). The active-site Proton acceptor is the E133. Residues E134, E162, and H348 each coordinate Zn(2+).

It belongs to the peptidase M20A family. DapE subfamily. Homodimer. The cofactor is Zn(2+). Co(2+) serves as cofactor.

The enzyme catalyses N-succinyl-(2S,6S)-2,6-diaminopimelate + H2O = (2S,6S)-2,6-diaminopimelate + succinate. Its pathway is amino-acid biosynthesis; L-lysine biosynthesis via DAP pathway; LL-2,6-diaminopimelate from (S)-tetrahydrodipicolinate (succinylase route): step 3/3. In terms of biological role, catalyzes the hydrolysis of N-succinyl-L,L-diaminopimelic acid (SDAP), forming succinate and LL-2,6-diaminopimelate (DAP), an intermediate involved in the bacterial biosynthesis of lysine and meso-diaminopimelic acid, an essential component of bacterial cell walls. The protein is Succinyl-diaminopimelate desuccinylase of Herminiimonas arsenicoxydans.